Consider the following 357-residue polypeptide: AA9 family lytic polysaccharide monooxygenase B (357 aa).

The signal sequence occupies residues 1 to 18 (MKFSSVLALAASAKLVAS). Positions 19 and 101 each coordinate Cu(2+). Residues 19-234 (HATVFAVWIN…IPGPAVWDGA (216 aa)) form a catalytic region. C61 and C182 form a disulfide bridge. O2 is bound by residues H168 and Q177. A Cu(2+)-binding site is contributed by Y179. The ser/Thr-rich linker stretch occupies residues 235–318 (SSGSGSSGSG…SAAPTGGTGT (84 aa)). The disordered stretch occupies residues 292–317 (SVRPTTSAAPTTSAPTSSAAPTGGTG). Over residues 295 to 313 (PTTSAAPTTSAPTSSAAPT) the composition is skewed to low complexity. One can recognise a CBM1 domain in the interval 319–355 (GSIQIYQQCGGMNYKGATGCASGLTCKQWNPYYHQCV).

It belongs to the polysaccharide monooxygenase AA9 family. Cu(2+) serves as cofactor.

The protein resides in the secreted. It catalyses the reaction [(1-&gt;4)-beta-D-glucosyl]n+m + reduced acceptor + O2 = 4-dehydro-beta-D-glucosyl-[(1-&gt;4)-beta-D-glucosyl]n-1 + [(1-&gt;4)-beta-D-glucosyl]m + acceptor + H2O.. Its function is as follows. Lytic polysaccharide monooxygenase (LPMO) that depolymerizes crystalline and amorphous polysaccharides via the oxidation of scissile alpha- or beta-(1-4)-glycosidic bonds, yielding C4 oxidation products. Catalysis by LPMOs requires the reduction of the active-site copper from Cu(II) to Cu(I) by a reducing agent and H(2)O(2) or O(2) as a cosubstrate. Active on carboxymethylcellulose (CMC), hydroxyethylcellulose (HEC) and beta-glucan. Also active on soluble cellohexaose, a property that is restricted to only a few characterized LPMOs. The polypeptide is AA9 family lytic polysaccharide monooxygenase B (Emericella nidulans (strain FGSC A4 / ATCC 38163 / CBS 112.46 / NRRL 194 / M139) (Aspergillus nidulans)).